We begin with the raw amino-acid sequence, 124 residues long: Histone H2A (124 aa).

Residues 1-18 (MSGRGKGGKAKGKSKTRS) are compositionally biased toward basic residues. The interval 1–23 (MSGRGKGGKAKGKSKTRSSRAGL) is disordered. N-acetylserine is present on S2. S2 bears the Phosphoserine mark. At Q104 the chain carries N5-methylglutamine.

It belongs to the histone H2A family. As to quaternary structure, the nucleosome is a histone octamer containing two molecules each of H2A, H2B, H3 and H4 assembled in one H3-H4 heterotetramer and two H2A-H2B heterodimers. The octamer wraps approximately 147 bp of DNA. Phosphorylation of Ser-2 directly represses transcription.

It localises to the nucleus. The protein resides in the chromosome. Its function is as follows. Core component of nucleosome. Nucleosomes wrap and compact DNA into chromatin, limiting DNA accessibility to the cellular machineries which require DNA as a template. Histones thereby play a central role in transcription regulation, DNA repair, DNA replication and chromosomal stability. DNA accessibility is regulated via a complex set of post-translational modifications of histones, also called histone code, and nucleosome remodeling. The protein is Histone H2A of Platynereis dumerilii (Dumeril's clam worm).